The chain runs to 484 residues: MQEGKNIWSLILAAIRKELSEEEFYIWFENLYFIDAIGENIKIATPNSFHKNQVEKRFSKRIKEILIEKGHSTINVEFIHSQNELKDHNTESKDIPLKAITHQQDLQTKNKDIKTHAKNIINNTKQYSIKEEIHIKYRNPFLKKKYTFENFIIGTNNKLAYNASLSIAKNPGKKYNPCLIYGGVGLGKTHLLQSIGNKTEELHKEFKILYVTAENFLNEFVESIKTNETKRFKKKYRHLDMLLLDDIHDLQKKEGIQEELFHTFNALYEDNKQMVFTCDRQPSELVNFTDRLKSRFTRGLNVDISKPNFELRVAIIEKKAEEDGIKVPKNILNLVAKKVTTNIRDLEAAVTKLKAHIDLEDIEIDTNIVDKIIKEIIAYENDHTNTPNKINIENIKKVILRELKLTNKDIEGNSKKPEITKARHIYAYLLRNFTELSTIEIGKIIGGKTHSTVLYSINKIDKDRNKNLEINNLIIELMNKINKN.

The interval 1–73 (MQEGKNIWSL…EILIEKGHST (73 aa)) is domain I, interacts with DnaA modulators. The interval 73-140 (TINVEFIHSQ…EEIHIKYRNP (68 aa)) is domain II. The domain III, AAA+ region stretch occupies residues 141–357 (FLKKKYTFEN…AAVTKLKAHI (217 aa)). 4 residues coordinate ATP: glycine 185, glycine 187, lysine 188, and threonine 189. Residues 358–484 (DLEDIEIDTN…IELMNKINKN (127 aa)) form a domain IV, binds dsDNA region.

Belongs to the DnaA family. As to quaternary structure, oligomerizes as a right-handed, spiral filament on DNA at oriC.

It localises to the cytoplasm. In terms of biological role, plays an essential role in the initiation and regulation of chromosomal replication. ATP-DnaA binds to the origin of replication (oriC) to initiate formation of the DNA replication initiation complex once per cell cycle. Binds the DnaA box (a 9 base pair repeat at the origin) and separates the double-stranded (ds)DNA. Forms a right-handed helical filament on oriC DNA; dsDNA binds to the exterior of the filament while single-stranded (ss)DNA is stabiized in the filament's interior. The ATP-DnaA-oriC complex binds and stabilizes one strand of the AT-rich DNA unwinding element (DUE), permitting loading of DNA polymerase. After initiation quickly degrades to an ADP-DnaA complex that is not apt for DNA replication. Binds acidic phospholipids. The chain is Chromosomal replication initiator protein DnaA from Borrelia recurrentis (strain A1).